The chain runs to 467 residues: Glutamate--tRNA ligase (467 aa).

The 'HIGH' region signature appears at 9–19; the sequence is PSPTGFLHIGG. A 'KMSKS' region motif is present at residues 250–254; the sequence is KLSKR. Lys-253 provides a ligand contact to ATP.

Belongs to the class-I aminoacyl-tRNA synthetase family. Glutamate--tRNA ligase type 1 subfamily. Monomer.

Its subcellular location is the cytoplasm. It carries out the reaction tRNA(Glu) + L-glutamate + ATP = L-glutamyl-tRNA(Glu) + AMP + diphosphate. Catalyzes the attachment of glutamate to tRNA(Glu) in a two-step reaction: glutamate is first activated by ATP to form Glu-AMP and then transferred to the acceptor end of tRNA(Glu). The protein is Glutamate--tRNA ligase of Mesomycoplasma hyopneumoniae (strain J / ATCC 25934 / NCTC 10110) (Mycoplasma hyopneumoniae).